The chain runs to 122 residues: Large ribosomal subunit protein uL14 (122 aa).

Belongs to the universal ribosomal protein uL14 family. Part of the 50S ribosomal subunit. Forms a cluster with proteins L3 and L19. In the 70S ribosome, L14 and L19 interact and together make contacts with the 16S rRNA in bridges B5 and B8.

Functionally, binds to 23S rRNA. Forms part of two intersubunit bridges in the 70S ribosome. The sequence is that of Large ribosomal subunit protein uL14 from Mycobacterium leprae (strain TN).